The chain runs to 274 residues: Diaminopimelate epimerase (274 aa).

Residues Asn-11, Gln-44, and Asn-64 each coordinate substrate. Cys-73 serves as the catalytic Proton donor. Substrate is bound by residues 74-75, Asn-157, Asn-190, and 208-209; these read GN and ER. Catalysis depends on Cys-217, which acts as the Proton acceptor. Position 218–219 (218–219) interacts with substrate; the sequence is GS.

This sequence belongs to the diaminopimelate epimerase family. As to quaternary structure, homodimer.

It localises to the cytoplasm. It carries out the reaction (2S,6S)-2,6-diaminopimelate = meso-2,6-diaminopimelate. Its pathway is amino-acid biosynthesis; L-lysine biosynthesis via DAP pathway; DL-2,6-diaminopimelate from LL-2,6-diaminopimelate: step 1/1. Catalyzes the stereoinversion of LL-2,6-diaminopimelate (L,L-DAP) to meso-diaminopimelate (meso-DAP), a precursor of L-lysine and an essential component of the bacterial peptidoglycan. This chain is Diaminopimelate epimerase, found in Photorhabdus laumondii subsp. laumondii (strain DSM 15139 / CIP 105565 / TT01) (Photorhabdus luminescens subsp. laumondii).